We begin with the raw amino-acid sequence, 248 residues long: Flavodoxin/ferredoxin--NADP reductase (248 aa).

Residues 2–101 (ADWVTGKVTK…SEAAGFFVLD (100 aa)) form the FAD-binding FR-type domain. Residues 50–53 (RAYS), Tyr-66, 74–76 (KLS), and Thr-116 contribute to the FAD site. Residues 143 to 144 (AR), 173 to 174 (SR), Arg-184, 214 to 216 (NPQ), and Asp-220 contribute to the NADP(+) site. 247–248 (YW) contacts FAD.

The protein belongs to the ferredoxin--NADP reductase type 1 family. FAD serves as cofactor.

Its subcellular location is the cytoplasm. It catalyses the reaction 2 reduced [2Fe-2S]-[ferredoxin] + NADP(+) + H(+) = 2 oxidized [2Fe-2S]-[ferredoxin] + NADPH. It carries out the reaction reduced [flavodoxin] + NADP(+) = oxidized [flavodoxin] + NADPH + 2 H(+). Functionally, transports electrons between flavodoxin or ferredoxin and NADPH. The sequence is that of Flavodoxin/ferredoxin--NADP reductase (fpr) from Shigella flexneri.